The primary structure comprises 280 residues: MKQHTLAEAIAHTGVGLHSGVSTHVRILPADAGSGRYFVRVDLPDSPTIPAQVAVVSQTVLSTQLGGGETGVRTVEHLLAALAGMGVDNARIEIDGPEIPLLDGSAQEWVTSIAEVGLVAQAVTNNLASFDIQEPIWIHQDDAFVAAIPASETRFSYGIDFDLPAIGNQWYSWSLTTEPDTSFAQEIAPARTFGLLHQIEYLQKSGLIKGGSLDNALICGPDGWVNPPLRFANEPVRHKILDLVGDLSLLGYFPRAHFLAYKASHNLHIQLAQRILALSN.

Residues histidine 77, histidine 238, and aspartate 242 each contribute to the Zn(2+) site. The active-site Proton donor is the histidine 265.

It belongs to the LpxC family. The cofactor is Zn(2+).

The catalysed reaction is a UDP-3-O-[(3R)-3-hydroxyacyl]-N-acetyl-alpha-D-glucosamine + H2O = a UDP-3-O-[(3R)-3-hydroxyacyl]-alpha-D-glucosamine + acetate. Its pathway is glycolipid biosynthesis; lipid IV(A) biosynthesis; lipid IV(A) from (3R)-3-hydroxytetradecanoyl-[acyl-carrier-protein] and UDP-N-acetyl-alpha-D-glucosamine: step 2/6. Catalyzes the hydrolysis of UDP-3-O-myristoyl-N-acetylglucosamine to form UDP-3-O-myristoylglucosamine and acetate, the committed step in lipid A biosynthesis. In Nostoc sp. (strain PCC 7120 / SAG 25.82 / UTEX 2576), this protein is UDP-3-O-acyl-N-acetylglucosamine deacetylase.